We begin with the raw amino-acid sequence, 289 residues long: Probable aquaporin PIP-type 7a (289 aa).

The tract at residues 1–39 (MEAKEQDVSLGANKFPERQPLGIAAQSQDEPKDYQEPPP) is disordered. Residues 1 to 57 (MEAKEQDVSLGANKFPERQPLGIAAQSQDEPKDYQEPPPAPLFEPSELTSWSFYRAG) are Cytoplasmic-facing. Residues 58-78 (IAEFIATFLFLYITVLTVMGV) form a helical membrane-spanning segment. At 79–91 (VRESSKCKTVGIQ) the chain is on the extracellular side. The helical transmembrane segment at 92–112 (GIAWAFGGMIFALVYCTAGIS) threads the bilayer. Over 113–135 (GGHINPAVTFGLFLARKLSLTRA) the chain is Cytoplasmic. Positions 117–119 (NPA) match the NPA 1 motif. Residues 136-156 (IFYMVMQVLGAICGAGVVKGF) traverse the membrane as a helical segment. Over 157 to 178 (EGKQRFGDLNGGANFVAPGYTK) the chain is Extracellular. Residues 179-199 (GDGLGAEIVGTFILVYTVFSA) form a helical membrane-spanning segment. At 200 to 212 (TDAKRSARDSHVP) the chain is on the cytoplasmic side. A helical membrane pass occupies residues 213-233 (ILAPLPIGFAVFLVHLATIPI). Residues 234–260 (TGTGINPARSLGAAIVFNKKIGWNDHW) lie on the Extracellular side of the membrane. An NPA 2 motif is present at residues 239 to 241 (NPA). The helical transmembrane segment at 261 to 281 (IFWVGPFIGAALAALYHQVVI) threads the bilayer. Residues 282 to 289 (RAIPFKSK) are Cytoplasmic-facing.

Belongs to the MIP/aquaporin (TC 1.A.8) family. PIP (TC 1.A.8.11) subfamily.

The protein localises to the cell membrane. Functionally, aquaporins facilitate the transport of water and small neutral solutes across cell membranes. The sequence is that of Probable aquaporin PIP-type 7a (TRG-31) from Pisum sativum (Garden pea).